We begin with the raw amino-acid sequence, 387 residues long: Calcium sensing receptor, chloroplastic (387 aa).

The transit peptide at 1-33 (MAMAEMATKSSLSAKLTLPSSSTKKTLSLRQVS) directs the protein to the chloroplast. At 34–186 (VSLPTSTSIS…TMDTISSADP (153 aa)) the chain is on the lumenal, thylakoid side. Residues 187–207 (SVIVVAAGAAFLAYLLLPPVF) form a helical membrane-spanning segment. Residues 208 to 387 (SAISFNFRGY…SGTKFLPSSD (180 aa)) are Stromal-facing. The Rhodanese domain occupies 231-352 (CTKNYLMVDI…WLQSRLGTDS (122 aa)). Threonine 380 bears the Phosphothreonine mark.

Post-translationally, phosphorylation seems to be light-dependent. As to expression, predominantly expressed in the shoot, including guard cells.

The protein localises to the plastid. Its subcellular location is the chloroplast thylakoid membrane. Modulates cytoplasmic Ca(2+) concentration and is crucial for proper stomatal regulation in response to elevated levels of external Ca(2+). May function by regulating concentrations of inositol 1,4,5-trisphosphate (IP3), which in turn triggers release of Ca(2+) from internal stores. May play a role in de-etiolation. This chain is Calcium sensing receptor, chloroplastic (CAS), found in Arabidopsis thaliana (Mouse-ear cress).